We begin with the raw amino-acid sequence, 141 residues long: Nucleoside diphosphate kinase (141 aa).

Positions 11, 59, 87, 93, 104, and 114 each coordinate ATP. Residue H117 is the Pros-phosphohistidine intermediate of the active site.

This sequence belongs to the NDK family. Homotetramer. The cofactor is Mg(2+).

Its subcellular location is the cytoplasm. It catalyses the reaction a 2'-deoxyribonucleoside 5'-diphosphate + ATP = a 2'-deoxyribonucleoside 5'-triphosphate + ADP. It carries out the reaction a ribonucleoside 5'-diphosphate + ATP = a ribonucleoside 5'-triphosphate + ADP. Functionally, major role in the synthesis of nucleoside triphosphates other than ATP. The ATP gamma phosphate is transferred to the NDP beta phosphate via a ping-pong mechanism, using a phosphorylated active-site intermediate. The polypeptide is Nucleoside diphosphate kinase (Nitrosomonas eutropha (strain DSM 101675 / C91 / Nm57)).